The primary structure comprises 332 residues: Ornithine carbamoyltransferase, catabolic (332 aa).

Carbamoyl phosphate-binding positions include 60-63 (STRT), Q87, R111, and 138-141 (HPTQ). Residues N170, D230, and 234–235 (SM) each bind L-ornithine. Residues 271–272 (CL) and R316 each bind carbamoyl phosphate.

Belongs to the aspartate/ornithine carbamoyltransferase superfamily. OTCase family.

Its subcellular location is the cytoplasm. The catalysed reaction is carbamoyl phosphate + L-ornithine = L-citrulline + phosphate + H(+). The protein operates within amino-acid degradation; L-arginine degradation via ADI pathway; carbamoyl phosphate from L-arginine: step 2/2. Reversibly catalyzes the transfer of the carbamoyl group from carbamoyl phosphate (CP) to the N(epsilon) atom of ornithine (ORN) to produce L-citrulline. The protein is Ornithine carbamoyltransferase, catabolic of Bacillus thuringiensis subsp. konkukian (strain 97-27).